The primary structure comprises 195 residues: Phosphoheptose isomerase (195 aa).

The 160-residue stretch at 36-195 (LAHCLLSDGK…DLVDHQLFGE (160 aa)) folds into the SIS domain. 51–53 (NGG) is a binding site for substrate. Zn(2+)-binding residues include histidine 60 and glutamate 64. Residues glutamate 64, 93–94 (ND), 119–121 (STS), serine 124, and glutamine 174 each bind substrate. The Zn(2+) site is built by glutamine 174 and histidine 182.

It belongs to the SIS family. GmhA subfamily. In terms of assembly, homotetramer. It depends on Zn(2+) as a cofactor.

Its subcellular location is the cytoplasm. It carries out the reaction 2 D-sedoheptulose 7-phosphate = D-glycero-alpha-D-manno-heptose 7-phosphate + D-glycero-beta-D-manno-heptose 7-phosphate. It participates in carbohydrate biosynthesis; D-glycero-D-manno-heptose 7-phosphate biosynthesis; D-glycero-alpha-D-manno-heptose 7-phosphate and D-glycero-beta-D-manno-heptose 7-phosphate from sedoheptulose 7-phosphate: step 1/1. In terms of biological role, catalyzes the isomerization of sedoheptulose 7-phosphate in D-glycero-D-manno-heptose 7-phosphate. The protein is Phosphoheptose isomerase of Methylococcus capsulatus (strain ATCC 33009 / NCIMB 11132 / Bath).